A 268-amino-acid polypeptide reads, in one-letter code: MSSMKIAIAGASGRMGRMLIEAVLAAPDATLAGALDRTGSSQLGQDAGAFLGKQTGVALTDDIERVCAEADYLIDFTRPEGTLAHLDAALRHDVKLVIGTTGFSEPQKAQLRAAGGKIALVFSANMSVGVNVTMKLLEFAAKQFAQGYDIEIIEAHHRHKVDAPSGTALMMGETIAAATGRTLDDCAVYGRHGVTGERDPSTIGFSAIRGGDIVGDHTVLFAGIGERIEITHKSASRVSYAQGALRAARFLAGHQAGFFDMQDVLGLR.

NAD(+) is bound by residues 10-15 (GASGRM) and D36. Residue R37 participates in NADP(+) binding. NAD(+)-binding positions include 99 to 101 (GTT) and 123 to 126 (SANM). Catalysis depends on H156, which acts as the Proton donor/acceptor. H157 contributes to the (S)-2,3,4,5-tetrahydrodipicolinate binding site. K160 acts as the Proton donor in catalysis. 166–167 (GT) contacts (S)-2,3,4,5-tetrahydrodipicolinate.

It belongs to the DapB family.

It is found in the cytoplasm. The catalysed reaction is (S)-2,3,4,5-tetrahydrodipicolinate + NAD(+) + H2O = (2S,4S)-4-hydroxy-2,3,4,5-tetrahydrodipicolinate + NADH + H(+). The enzyme catalyses (S)-2,3,4,5-tetrahydrodipicolinate + NADP(+) + H2O = (2S,4S)-4-hydroxy-2,3,4,5-tetrahydrodipicolinate + NADPH + H(+). The protein operates within amino-acid biosynthesis; L-lysine biosynthesis via DAP pathway; (S)-tetrahydrodipicolinate from L-aspartate: step 4/4. Functionally, catalyzes the conversion of 4-hydroxy-tetrahydrodipicolinate (HTPA) to tetrahydrodipicolinate. This chain is 4-hydroxy-tetrahydrodipicolinate reductase, found in Burkholderia mallei (strain NCTC 10247).